A 491-amino-acid chain; its full sequence is CRM-domain containing factor CFM9, mitochondrial (491 aa).

The transit peptide at Met-1 to Glu-25 directs the protein to the mitochondrion. The disordered stretch occupies residues Met-1–Lys-34. Basic and acidic residues predominate over residues Ser-22–Lys-34. The CRM domain occupies Glu-90–Ile-187. A compositionally biased stretch (basic and acidic residues) spans Pro-255–Glu-265. Disordered stretches follow at residues Pro-255–Glu-287 and Arg-328–Asp-491. Residues Glu-277–Glu-287 are compositionally biased toward acidic residues. Basic and acidic residues predominate over residues Arg-345–Asp-359. The segment covering Ser-360–Glu-375 has biased composition (acidic residues). Basic and acidic residues predominate over residues Arg-392–Asp-416. Residues Thr-453–Ser-478 are compositionally biased toward polar residues.

Highly expressed in roots and meristemic regions of young seedlings. Expressed at low levels in stems, trichomes and stigma.

It localises to the mitochondrion. Its function is as follows. Involved in the splicing of group II introns in mitochondria. Required for the splicing of mitochondrial introns found in nad1, nad2, nad4, nad5, nad7, rps3 and cox2 genes. Splicing of mitochondrial introns is crucial for mitochondrial biogenesis and function, plant growth and development, and plant response to abiotic stresses. The chain is CRM-domain containing factor CFM9, mitochondrial from Arabidopsis thaliana (Mouse-ear cress).